Here is a 106-residue protein sequence, read N- to C-terminus: Protein Rev (106 aa).

The tract at residues 8-16 (LIKFLYQSN) is homomultimerization. Residues 14–39 (QSNPPPKPEGTRQARRNRRRRWRERQ) are disordered. The Nuclear localization signal and RNA-binding (RRE) signature appears at 24–40 (TRQARRNRRRRWRERQR). Residues 26 to 37 (QARRNRRRRWRE) are compositionally biased toward basic residues. The Nuclear export signal and binding to XPO1 motif lies at 63–74 (LQLPPLERLTLD). Phosphoserine; by host is present on residues Ser82 and Ser89. A disordered region spans residues 82 to 106 (SGTQGVGSPQILVESPTVLESGTKE).

It belongs to the HIV-1 REV protein family. In terms of assembly, homomultimer; when bound to the RRE. Multimeric assembly is essential for activity and may involve XPO1. Binds to human KPNB1, XPO1, TNPO1, RANBP5 and IPO7. Interacts with the viral Integrase. Interacts with human KHDRBS1. Interacts with human NAP1; this interaction decreases Rev multimerization and stimulates its activity. Interacts with human DEAD-box helicases DDX3 and DDX24; these interactions may serve for viral RNA export to the cytoplasm and packaging, respectively. Interacts with human PSIP1; this interaction may inhibit HIV-1 DNA integration by promoting dissociation of the Integrase-LEDGF/p75 complex. Asymmetrically arginine dimethylated at one site by host PRMT6. Methylation impairs the RNA-binding activity and export of viral RNA from the nucleus to the cytoplasm. Post-translationally, phosphorylated by protein kinase CK2. Presence of, and maybe binding to the N-terminus of the regulatory beta subunit of CK2 is necessary for CK2-mediated Rev's phosphorylation.

It localises to the host nucleus. Its subcellular location is the host nucleolus. The protein resides in the host cytoplasm. In terms of biological role, escorts unspliced or incompletely spliced viral pre-mRNAs (late transcripts) out of the nucleus of infected cells. These pre-mRNAs carry a recognition sequence called Rev responsive element (RRE) located in the env gene, that is not present in fully spliced viral mRNAs (early transcripts). This function is essential since most viral proteins are translated from unspliced or partially spliced pre-mRNAs which cannot exit the nucleus by the pathway used by fully processed cellular mRNAs. Rev itself is translated from a fully spliced mRNA that readily exits the nucleus. Rev's nuclear localization signal (NLS) binds directly to KPNB1/Importin beta-1 without previous binding to KPNA1/Importin alpha-1. KPNB1 binds to the GDP bound form of RAN (Ran-GDP) and targets Rev to the nucleus. In the nucleus, the conversion from Ran-GDP to Ran-GTP dissociates Rev from KPNB1 and allows Rev's binding to the RRE in viral pre-mRNAs. Rev multimerization on the RRE via cooperative assembly exposes its nuclear export signal (NES) to the surface. Rev can then form a complex with XPO1/CRM1 and Ran-GTP, leading to nuclear export of the complex. Conversion from Ran-GTP to Ran-GDP mediates dissociation of the Rev/RRE/XPO1/RAN complex, so that Rev can return to the nucleus for a subsequent round of export. Beside KPNB1, also seems to interact with TNPO1/Transportin-1, RANBP5/IPO5 and IPO7/RANBP7 for nuclear import. The nucleoporin-like HRB/RIP is an essential cofactor that probably indirectly interacts with Rev to release HIV RNAs from the perinuclear region to the cytoplasm. This is Protein Rev from Homo sapiens (Human).